A 97-amino-acid polypeptide reads, in one-letter code: Large ribosomal subunit protein uL23 (97 aa).

It belongs to the universal ribosomal protein uL23 family. As to quaternary structure, part of the 50S ribosomal subunit. Contacts protein L29, and trigger factor when it is bound to the ribosome.

One of the early assembly proteins it binds 23S rRNA. One of the proteins that surrounds the polypeptide exit tunnel on the outside of the ribosome. Forms the main docking site for trigger factor binding to the ribosome. The chain is Large ribosomal subunit protein uL23 from Agrobacterium fabrum (strain C58 / ATCC 33970) (Agrobacterium tumefaciens (strain C58)).